Consider the following 983-residue polypeptide: Protein translocase subunit SecA (983 aa).

ATP contacts are provided by residues Q83, 101–105, and D489; that span reads GEGKT. The interval 948-983 is disordered; sequence ISSEEEDNNEKTNINNNEDLERTKGEAQQTAKNPNE. Over residues 973-983 the composition is skewed to polar residues; that stretch reads EAQQTAKNPNE.

This sequence belongs to the SecA family. Monomer and homodimer. Part of the essential Sec protein translocation apparatus which comprises SecA, SecYEG and auxiliary proteins SecDF. Other proteins may also be involved.

It localises to the cell membrane. The protein resides in the cytoplasm. It carries out the reaction ATP + H2O + cellular proteinSide 1 = ADP + phosphate + cellular proteinSide 2.. In terms of biological role, part of the Sec protein translocase complex. Interacts with the SecYEG preprotein conducting channel. Has a central role in coupling the hydrolysis of ATP to the transfer of proteins into and across the cell membrane, serving as an ATP-driven molecular motor driving the stepwise translocation of polypeptide chains across the membrane. This Mesomycoplasma hyopneumoniae (strain 232) (Mycoplasma hyopneumoniae) protein is Protein translocase subunit SecA.